The primary structure comprises 183 residues: Archaemetzincin (183 aa).

Position 131 (His-131) interacts with Zn(2+). Glu-132 functions as the Proton acceptor in the catalytic mechanism. His-135, His-141, Cys-142, Cys-147, and Cys-166 together coordinate Zn(2+).

This sequence belongs to the peptidase M54 family. In terms of assembly, monomer. It depends on Zn(2+) as a cofactor.

Probable zinc metalloprotease whose natural substrate is unknown. In Saccharolobus solfataricus (strain ATCC 35092 / DSM 1617 / JCM 11322 / P2) (Sulfolobus solfataricus), this protein is Archaemetzincin.